The chain runs to 112 residues: Class I hydrophobin 17 (112 aa).

The first 19 residues, 1–19 (MYSQSMVLLAAAFASFVAA), serve as a signal peptide directing secretion. 4 disulfide bridges follow: cysteine 30/cysteine 90, cysteine 37/cysteine 84, cysteine 38/cysteine 74, and cysteine 91/cysteine 104. A glycan (N-linked (GlcNAc...) asparagine) is linked at asparagine 108.

It belongs to the fungal hydrophobin family. In terms of assembly, self-assembles to form functional amyloid fibrils called rodlets. Self-assembly into fibrillar rodlets occurs spontaneously at hydrophobic:hydrophilic interfaces and the rodlets further associate laterally to form amphipathic monolayers.

The protein resides in the secreted. The protein localises to the cell wall. Its function is as follows. Aerial growth, conidiation, and dispersal of filamentous fungi in the environment rely upon a capability of their secreting small amphipathic proteins called hydrophobins (HPBs) with low sequence identity. Class I can self-assemble into an outermost layer of rodlet bundles on aerial cell surfaces, conferring cellular hydrophobicity that supports fungal growth, development and dispersal; whereas Class II form highly ordered films at water-air interfaces through intermolecular interactions but contribute nothing to the rodlet structure. Hydph17 is a class I hydrophobin involved in mycelial growth. This chain is Class I hydrophobin 17, found in Pleurotus ostreatus (strain PC15) (Oyster mushroom).